Here is a 147-residue protein sequence, read N- to C-terminus: Hemoglobin subunit epsilon (147 aa).

One can recognise a Globin domain in the interval 3–147 (HFTAEEKAAV…VAIALAHKYH (145 aa)). Phosphoserine is present on residues S14 and S51. Heme b-binding residues include H64 and H93.

It belongs to the globin family. Heterotetramer of two alpha chains and two epsilon chains in early embryonic hemoglobin Gower-2; two zeta chains and two epsilon chains in early embryonic hemoglobin Gower-1. In terms of tissue distribution, red blood cells.

Its function is as follows. The epsilon chain is a beta-type chain of early mammalian embryonic hemoglobin. The protein is Hemoglobin subunit epsilon (HBE1) of Symphalangus syndactylus (Siamang).